A 147-amino-acid chain; its full sequence is Cystatin-9-like (147 aa).

Positions 1 to 28 (MLGLPWKGGLSWALLLLLLGSQILLIYA) are cleaved as a signal peptide. The cysteines at positions 98 and 108 are disulfide-linked. N-linked (GlcNAc...) asparagine glycosylation is found at N117 and N139. An intrachain disulfide couples C122 to C142.

Belongs to the cystatin family. As to expression, specifically expressed in testis.

Its subcellular location is the secreted. The chain is Cystatin-9-like (CST9L) from Homo sapiens (Human).